The following is a 313-amino-acid chain: Ribosomal RNA small subunit methyltransferase H (313 aa).

Residues 35–37 (GGH), Asp-55, Phe-80, Asp-102, and Gln-109 each bind S-adenosyl-L-methionine.

This sequence belongs to the methyltransferase superfamily. RsmH family.

The protein resides in the cytoplasm. It catalyses the reaction cytidine(1402) in 16S rRNA + S-adenosyl-L-methionine = N(4)-methylcytidine(1402) in 16S rRNA + S-adenosyl-L-homocysteine + H(+). Specifically methylates the N4 position of cytidine in position 1402 (C1402) of 16S rRNA. This chain is Ribosomal RNA small subunit methyltransferase H, found in Shewanella putrefaciens (strain CN-32 / ATCC BAA-453).